The primary structure comprises 146 residues: Lysozyme-like protein 4 (146 aa).

The signal sequence occupies residues 1–19; that stretch reads MKASVVLSLLGYLVVPSGA. Positions 20-146 constitute a C-type lysozyme domain; sequence YILGRCTVAK…LARWLDGCKL (127 aa). 4 cysteine pairs are disulfide-bonded: C25–C144, C49–C131, C84–C96, and C92–C110. E54 is a catalytic residue.

It belongs to the glycosyl hydrolase 22 family. As to quaternary structure, monomer. Expressed in testis and epididymis.

Its subcellular location is the secreted. The protein localises to the cytoplasmic vesicle. It localises to the secretory vesicle. The protein resides in the acrosome. It is found in the cell projection. Its subcellular location is the cilium. The protein localises to the flagellum. Its function is as follows. May be involved in fertilization. Has no detectable bacteriolytic and lysozyme activities in vitro. The polypeptide is Lysozyme-like protein 4 (LYZL4) (Homo sapiens (Human)).